The following is a 353-amino-acid chain: Major outer membrane protein (353 aa).

Residues 1 to 20 (MKKTIVALAVAAVAATSANA) form the signal peptide.

Disulfide bond interactions within and between MOMP molecules and other components form high molecular-weight oligomers.

It is found in the cell outer membrane. Functionally, structural rigidity of the outer membrane of elementary bodies and porin forming, permitting diffusion of solutes through the intracellular reticulate body membrane. This Pasteurella multocida protein is Major outer membrane protein (ompH).